A 553-amino-acid chain; its full sequence is PE cleavage protein A (553 aa).

The region spanning 1–92 (MSLLVVAPEW…SAGSYSAAEA (92 aa)) is the PE domain. D293 is a catalytic residue.

This sequence belongs to the mycobacterial PE family. PGRS subfamily. In terms of processing, undergoes auto-proteolytic processing.

It is found in the secreted. Its subcellular location is the cell surface. In terms of biological role, aspartic protease that processes the lipase LipY and other PE_PGRS proteins. Can also cleave itself. Cleaves LipY both inside the PE domain, before amino acid 98, and after amino acids 136 and 149. Involved in virulence. The protein is PE cleavage protein A of Mycobacterium marinum (strain ATCC BAA-535 / M).